We begin with the raw amino-acid sequence, 387 residues long: Solute carrier family 25 protein Shawn (387 aa).

Solcar repeat units follow at residues isoleucine 37 to arginine 156, isoleucine 179 to serine 263, and proline 269 to phenylalanine 366. Transmembrane regions (helical) follow at residues valine 43–isoleucine 63, leucine 128–valine 148, isoleucine 179–valine 199, leucine 235–threonine 255, phenylalanine 275–valine 295, and alanine 337–isoleucine 357.

This sequence belongs to the mitochondrial carrier (TC 2.A.29) family.

It localises to the mitochondrion inner membrane. Its function is as follows. Mitochondrial transporter required for glutathione import into mitochondria. This is Solute carrier family 25 protein Shawn from Drosophila melanogaster (Fruit fly).